The primary structure comprises 237 residues: Uridylate kinase (237 aa).

An ATP-binding site is contributed by 11–14; that stretch reads KLSG. A UMP-binding site is contributed by Gly-53. Positions 54 and 58 each coordinate ATP. Residues Asp-73 and 134 to 141 each bind UMP; that span reads TGNPFFTT. ATP contacts are provided by Thr-161, Tyr-167, and Asp-170.

This sequence belongs to the UMP kinase family. Homohexamer.

It localises to the cytoplasm. It carries out the reaction UMP + ATP = UDP + ADP. The protein operates within pyrimidine metabolism; CTP biosynthesis via de novo pathway; UDP from UMP (UMPK route): step 1/1. Inhibited by UTP. Functionally, catalyzes the reversible phosphorylation of UMP to UDP. The protein is Uridylate kinase of Burkholderia lata (strain ATCC 17760 / DSM 23089 / LMG 22485 / NCIMB 9086 / R18194 / 383).